Here is a 714-residue protein sequence, read N- to C-terminus: Stellatatriene synthase (714 aa).

The segment at 1 to 325 is stellata-2,6,19-trien synthase; that stretch reads MEYKFSTVVD…RYNSSGSFSD (325 aa). Mg(2+)-binding residues include Asp92 and Asp96. Residues 92-96 carry the DDXXD motif 1 motif; that stretch reads DDVTD. Residues 276-284 carry the NSE motif motif; that stretch reads YLKIVEEYK. Positions 326–713 are geranylgeranyl diphosphate synthase; that stretch reads HQLELMKNGV…LRLIMELLKT (388 aa). Positions 332-356 are disordered; that stretch reads KNGVPKDPASGSTNGTSNGTSNGTS. The segment covering 341–356 has biased composition (low complexity); the sequence is SGSTNGTSNGTSNGTS. Lys434, Arg437, and His466 together coordinate isopentenyl diphosphate. 2 residues coordinate Mg(2+): Asp473 and Asp477. The DDXXD motif 2 motif lies at 473–477; that stretch reads DDVED. Dimethylallyl diphosphate is bound at residue Arg482. Arg483 lines the isopentenyl diphosphate pocket. The dimethylallyl diphosphate site is built by Lys560, Thr561, Gln596, Asn603, Lys613, and Lys623.

The protein in the N-terminal section; belongs to the terpene synthase family. In the C-terminal section; belongs to the FPP/GGPP synthase family. In terms of assembly, hexamer.

The catalysed reaction is 4 isopentenyl diphosphate + dimethylallyl diphosphate = (2E,6E,10E,14E)-geranylfarnesyl diphosphate + 4 diphosphate. The enzyme catalyses (2E,6E,10E,14E)-geranylfarnesyl diphosphate = stellata-2,6,19-triene + diphosphate. It functions in the pathway secondary metabolite biosynthesis; terpenoid biosynthesis. Multifunctional diterpene synthase; part of the gene cluster that mediates the biosynthesis of the sesterterpene stellatic acid. The first step in the pathway is performed by the stellatatriene synthase that possesses both prenyl transferase and terpene cyclase activity, converting isopentenyl diphosphate and dimethylallyl diphosphate into geranylgeranyl diphosphate (GGDP) and then converting GGDP into stellata-2,6,19-triene. The cytochrome P450 monooxygenase Stl-P450 then catalyzes three successive oxidation reactions on the C-20 methyl group to generate the carboxylic acid of stellatic acid. The sequence is that of Stellatatriene synthase from Emericella variicolor (Aspergillus stellatus).